A 198-amino-acid chain; its full sequence is Probable GTP-binding protein EngB (198 aa).

The EngB-type G domain maps to 21–195 (NFSEVAFLGR…EDIIINQTLG (175 aa)). GTP-binding positions include 29 to 36 (GRSNVGKS), 56 to 60 (GKTQL), 81 to 84 (DLPG), 151 to 154 (TKCD), and 174 to 176 (VSN). The Mg(2+) site is built by serine 36 and threonine 58.

It belongs to the TRAFAC class TrmE-Era-EngA-EngB-Septin-like GTPase superfamily. EngB GTPase family. The cofactor is Mg(2+).

In terms of biological role, necessary for normal cell division and for the maintenance of normal septation. The sequence is that of Probable GTP-binding protein EngB from Campylobacter jejuni (strain RM1221).